We begin with the raw amino-acid sequence, 468 residues long: FAD-linked oxidoreductase azaG (468 aa).

The N-terminal stretch at 1 to 16 (MQLSGILSWLLSWLWA) is a signal peptide. Residue N44 is glycosylated (N-linked (GlcNAc...) asparagine). The region spanning 54–228 (TVHGAPHYLG…TSATYRTHQA (175 aa)) is the FAD-binding PCMH-type domain. 3 N-linked (GlcNAc...) asparagine glycosylation sites follow: N272, N348, and N464.

This sequence belongs to the oxygen-dependent FAD-linked oxidoreductase family. FAD serves as cofactor.

It functions in the pathway secondary metabolite biosynthesis. Its function is as follows. FAD-linked oxidoreductase; part of the gene cluster that mediates the biosynthesis of azaphilones, a class of fungal metabolites characterized by a highly oxygenated pyrano-quinone bicyclic core and exhibiting a broad range of bioactivities. In the first step, the non-reducing polyketide synthase azaA forms the hexaketide precursor from successive condensations of five malonyl-CoA units, presumably with a simple acetyl-CoA starter unit. The reactive polyketide chain then undergoes a PT-mediated C2-C7 cyclization to afford the aromatic ring and is eventually released as an aldehyde through the R-domain. The putative ketoreductase azaE is proposed to catalyze the reduction of the terminal ketone resulting in the early culture product FK17-P2a. The monooxygenase azaH was demonstrated to be the only enzyme required to convert FK17-P2a to azanigerone E. AzaH first hydroxylates the benzaldehyde intermediate FK17-P2a at C4, which triggers the formation of the pyran-ring to afford azanigerone E. In parallel, the 2,4-dimethylhexanoyl chain is synthesized by the HR-PKS azaB and is proposed to be transferred to the C4-hydroxyl of azanigerone E by the acyltransferase azaD directly from the ACP domain of azaB. Alternatively, the 2,4-dimethyl-hexanoyl chain may be offloaded from the HR-PKS as a carboxylic acid and converted to an acyl-CoA by azaF. The resulting acyl-CoA molecule could then be taken up as a substrate by AzaD to form azanigerone B. To yield the carboxylic acid substituent in azanigerone A, the hydroxypropyl side chain of azanigerone B would need to undergo a C-C oxidative cleavage catalyzed by cytochrome P450 AzaI. AzaI is proposed to act on a vicinal diol that leads to a C-C bond scission either through an alkoxyradical intermediate or a peroxy complex. In the biosynthesis of azanigerone A, azanigerone B first undergoes hydroxylation at C10, possibly catalyzed by one of the two FAD-dependent monooxygenases encoded in the cluster, azaG or azaL, resulting in the vicinal diol azanigerone C. Oxidative cleavage of azanigerone C by azaI would yield the corresponding aldehyde derivative of azanigerone A. Finally, the dehydrogenase azaJ is proposed to convert the aldehyde functional group into the carboxylic acid, completing the conversion from azanigerone B to azanigerone A. Alternatively, the oxidation of aldehyde to carboxylic acid may be catalyzed by the same P450 enzyme azaI via consecutive oxidation or by endogenous alcohol dehydrogenase. The protein is FAD-linked oxidoreductase azaG of Aspergillus niger (strain ATCC 1015 / CBS 113.46 / FGSC A1144 / LSHB Ac4 / NCTC 3858a / NRRL 328 / USDA 3528.7).